A 237-amino-acid chain; its full sequence is Flagellar brake protein YcgR (237 aa).

Residues 108–225 enclose the PilZ domain; the sequence is QRRRQFRVTT…MERKIQSAVF (118 aa).

This sequence belongs to the YcgR family. As to quaternary structure, monomer. Interacts with the flagellar basal bodies.

Its subcellular location is the bacterial flagellum basal body. Functionally, acts as a flagellar brake, regulating swimming and swarming in a bis-(3'-5') cyclic diguanylic acid (c-di-GMP)-dependent manner. Binds 1 c-di-GMP dimer per subunit. Increasing levels of c-di-GMP lead to decreased motility. The protein is Flagellar brake protein YcgR of Serratia proteamaculans (strain 568).